Here is a 236-residue protein sequence, read N- to C-terminus: MICOS complex subunit MIC25 (236 aa).

The segment covering 1 to 11 has biased composition (basic and acidic residues); the sequence is MGSAESREGRR. Residues 1 to 22 form a disordered region; that stretch reads MGSAESREGRRASFGMDEEERV. Glycine 2 carries N-myristoyl glycine lipidation. A phosphoserine mark is found at serine 13 and serine 31. Disordered stretches follow at residues 34–86 and 109–132; these read VVNR…VQVD and EREA…DQEK. The segment covering 48–58 has biased composition (low complexity); it reads GLLAPPAAALG. Basic and acidic residues-rich tracts occupy residues 62-71 and 122-132; these read GREKDSKPPR and RRGEGGVDQEK. Positions 127 to 167 form a coiled coil; the sequence is GVDQEKQRLAQRARELESQEEELRCRDAFYKEQLGRLERQN. The CHCH domain occupies 195–236; it reads EPVCSGLQAQILRCYRDRLQEVLLCADLVRAYQHCVSSAHKG. 2 consecutive short sequence motifs (cx9C motif) follow at residues 198-208 and 219-229; these read CSGLQAQILRC and CADLVRAYQHC. 2 disulfide bridges follow: cysteine 198–cysteine 229 and cysteine 208–cysteine 219.

It belongs to the MICOS complex subunit Mic19 family. Metazoan Mic25 subfamily. In terms of assembly, component of the mitochondrial contact site and cristae organizing system (MICOS) complex, composed of at least MICOS10/MIC10, CHCHD3/MIC19, CHCHD6/MIC25, APOOL/MIC27, IMMT/MIC60, APOO/MIC23/MIC26 and MICOS13/MIC13. This complex was also known under the names MINOS or MitOS complex. The MICOS complex associates with mitochondrial outer membrane proteins SAMM50, MTX1 and MTX2 (together described as components of the mitochondrial outer membrane sorting assembly machinery (SAM) complex) and DNAJC11, mitochondrial inner membrane protein TMEM11 and with HSPA9. The MICOS and SAM complexes together with DNAJC11 are part of a large protein complex spanning both membranes termed the mitochondrial intermembrane space bridging (MIB) complex. Interacts with DISC1. Interacts with IMMT/MIC60.

Its subcellular location is the mitochondrion inner membrane. It localises to the mitochondrion. Functionally, component of the MICOS complex, a large protein complex of the mitochondrial inner membrane that plays crucial roles in the maintenance of crista junctions, inner membrane architecture, and formation of contact sites to the outer membrane. The sequence is that of MICOS complex subunit MIC25 (CHCHD6) from Bos taurus (Bovine).